We begin with the raw amino-acid sequence, 51 residues long: Large ribosomal subunit protein eL39 (51 aa).

Belongs to the eukaryotic ribosomal protein eL39 family.

The polypeptide is Large ribosomal subunit protein eL39 (rpl39e) (Pyrobaculum aerophilum (strain ATCC 51768 / DSM 7523 / JCM 9630 / CIP 104966 / NBRC 100827 / IM2)).